The chain runs to 142 residues: Large ribosomal subunit protein uL24 (142 aa).

The segment covering 1–11 (MKVNPFVSSDS) has biased composition (polar residues). Residues 1-24 (MKVNPFVSSDSGKSRKAHFNAPSH) are disordered.

Belongs to the universal ribosomal protein uL24 family.

This Caenorhabditis elegans protein is Large ribosomal subunit protein uL24 (rpl-26).